We begin with the raw amino-acid sequence, 388 residues long: LIM/homeobox protein Lhx9 (388 aa).

LIM zinc-binding domains lie at 69 to 130 (ISDR…CHLG) and 131 to 193 (ISAS…LSYT). Disordered regions lie at residues 239-263 (ENEA…RMRT), 321-356 (ENGG…LTDL), and 369-388 (SNMD…TNLF). The segment at residues 267–326 (HHQLRTMKSYFAINHNPDAKDLKQLAQKTGLTKRVLQVWFQNARAKFRRNLLRQENGGVD) is a DNA-binding region (homeobox). The span at 344-356 (LTPPGTATTLTDL) shows a compositional bias: low complexity. The segment covering 376–388 (SGSPSQTTLTNLF) has biased composition (polar residues).

As to quaternary structure, interacts with LDB1 and LDB2.

It localises to the nucleus. Functionally, involved in gonadal development. The polypeptide is LIM/homeobox protein Lhx9 (Lhx9) (Rattus norvegicus (Rat)).